The following is a 335-amino-acid chain: CTD kinase subunit beta (335 aa).

2 consecutive Cyclin N-terminal domains span residues 26–151 (ILST…CFDF) and 158–241 (NYMV…LYMH). A disordered region spans residues 269 to 293 (KNSGRPQKPPQIDPHSSSLADEYRE).

The protein belongs to the cyclin family. In terms of assembly, CTDK-I consists of three subunits, ctk1/lsk1, ctk2/lsc1 and ctk3 (also called alpha, beta and gamma). Interacts with ctk1/lsk1. This interaction is dependent on ctk1/lsk1 kinase activity.

The protein resides in the cytoplasm. The protein localises to the nucleus. In terms of biological role, cyclin subunit of the CTDK-I complex, which hyperphosphorylates the C-terminal heptapeptide repeat domain (CTD) of the largest RNA polymerase II subunit. As part of the CTDK-I complex, involved in RNA polymerase II transcriptional elongation and pre-mRNA 3'-end processing. Together with ctk3, required for ctk1/lsk1 CTD kinase activation. Together with ctk1/lsk1, required for the regulation of cytokinesis by phosphorylating 'Ser-2' residues found in the heptad repeats of the CTD. The sequence is that of CTD kinase subunit beta (lsc1) from Schizosaccharomyces pombe (strain 972 / ATCC 24843) (Fission yeast).